We begin with the raw amino-acid sequence, 713 residues long: Phosphoribosylformylglycinamidine synthase subunit PurL (713 aa).

H32 is an active-site residue. ATP is bound at residue Y35. Mg(2+) is bound at residue E76. Substrate is bound by residues 77-80 and R99; that span reads SHNH. Catalysis depends on H78, which acts as the Proton acceptor. D100 contacts Mg(2+). Q224 serves as a coordination point for substrate. D252 provides a ligand contact to Mg(2+). 296-298 is a binding site for substrate; that stretch reads ESQ. Residues D471 and G508 each coordinate ATP. Position 509 (N509) interacts with Mg(2+). Residue S511 coordinates substrate.

It belongs to the FGAMS family. In terms of assembly, monomer. Part of the FGAM synthase complex composed of 1 PurL, 1 PurQ and 2 PurS subunits.

The protein localises to the cytoplasm. It carries out the reaction N(2)-formyl-N(1)-(5-phospho-beta-D-ribosyl)glycinamide + L-glutamine + ATP + H2O = 2-formamido-N(1)-(5-O-phospho-beta-D-ribosyl)acetamidine + L-glutamate + ADP + phosphate + H(+). The protein operates within purine metabolism; IMP biosynthesis via de novo pathway; 5-amino-1-(5-phospho-D-ribosyl)imidazole from N(2)-formyl-N(1)-(5-phospho-D-ribosyl)glycinamide: step 1/2. Functionally, part of the phosphoribosylformylglycinamidine synthase complex involved in the purines biosynthetic pathway. Catalyzes the ATP-dependent conversion of formylglycinamide ribonucleotide (FGAR) and glutamine to yield formylglycinamidine ribonucleotide (FGAM) and glutamate. The FGAM synthase complex is composed of three subunits. PurQ produces an ammonia molecule by converting glutamine to glutamate. PurL transfers the ammonia molecule to FGAR to form FGAM in an ATP-dependent manner. PurS interacts with PurQ and PurL and is thought to assist in the transfer of the ammonia molecule from PurQ to PurL. This chain is Phosphoribosylformylglycinamidine synthase subunit PurL, found in Thermococcus sibiricus (strain DSM 12597 / MM 739).